A 365-amino-acid polypeptide reads, in one-letter code: Peptide chain release factor 2 (365 aa).

Q251 is modified (N5-methylglutamine).

Belongs to the prokaryotic/mitochondrial release factor family. Post-translationally, methylated by PrmC. Methylation increases the termination efficiency of RF2.

It is found in the cytoplasm. In terms of biological role, peptide chain release factor 2 directs the termination of translation in response to the peptide chain termination codons UGA and UAA. This is Peptide chain release factor 2 from Neorickettsia sennetsu (strain ATCC VR-367 / Miyayama) (Ehrlichia sennetsu).